Reading from the N-terminus, the 201-residue chain is NADH-ubiquinone oxidoreductase chain 6 (201 aa).

5 consecutive transmembrane segments (helical) span residues 4–24 (LVLF…VISV), 28–48 (VFSV…LLLL), 55–75 (LLFL…VVMI), 88–108 (FYYA…IFII), and 151–171 (LFIL…ILTL).

Belongs to the complex I subunit 6 family.

It localises to the mitochondrion membrane. The catalysed reaction is a ubiquinone + NADH + 5 H(+)(in) = a ubiquinol + NAD(+) + 4 H(+)(out). Functionally, core subunit of the mitochondrial membrane respiratory chain NADH dehydrogenase (Complex I) that is believed to belong to the minimal assembly required for catalysis. Complex I functions in the transfer of electrons from NADH to the respiratory chain. The immediate electron acceptor for the enzyme is believed to be ubiquinone. The polypeptide is NADH-ubiquinone oxidoreductase chain 6 (ND6) (Cyanidium caldarium (Red alga)).